The chain runs to 658 residues: Threonine--tRNA ligase (658 aa).

One can recognise a TGS domain in the interval 1–64 (MLNSVSLTFP…GKSGKVEIIT (64 aa)). The interval 246–549 (DHRKLGREMD…LIENYSGHFP (304 aa)) is catalytic. Zn(2+)-binding residues include cysteine 343, histidine 394, and histidine 526.

Belongs to the class-II aminoacyl-tRNA synthetase family. Homodimer. Zn(2+) is required as a cofactor.

Its subcellular location is the cytoplasm. The catalysed reaction is tRNA(Thr) + L-threonine + ATP = L-threonyl-tRNA(Thr) + AMP + diphosphate + H(+). Catalyzes the attachment of threonine to tRNA(Thr) in a two-step reaction: L-threonine is first activated by ATP to form Thr-AMP and then transferred to the acceptor end of tRNA(Thr). Also edits incorrectly charged L-seryl-tRNA(Thr). The protein is Threonine--tRNA ligase of Mesorhizobium japonicum (strain LMG 29417 / CECT 9101 / MAFF 303099) (Mesorhizobium loti (strain MAFF 303099)).